The chain runs to 291 residues: Protease HtpX homolog (291 aa).

Helical transmembrane passes span 4–24 and 38–58; these read VVLF…SARI and MGML…ISLL. His-144 is a Zn(2+) binding site. Glu-145 is a catalytic residue. A Zn(2+)-binding site is contributed by His-148. A run of 2 helical transmembrane segments spans residues 152–172 and 199–219; these read GDMV…IFLS and ISSI…VMCF. Glu-224 is a binding site for Zn(2+).

It belongs to the peptidase M48B family. It depends on Zn(2+) as a cofactor.

The protein localises to the cell inner membrane. This Chlorobium limicola (strain DSM 245 / NBRC 103803 / 6330) protein is Protease HtpX homolog.